A 455-amino-acid chain; its full sequence is Growth/differentiation factor 9 (455 aa).

An N-terminal signal peptide occupies residues 1 to 24 (MALPNKFLLWFYCFAWLCFPVSLG). A propeptide spanning residues 25–320 (SQASGGDAQI…GRSSHHRHRR (296 aa)) is cleaved from the precursor. N-linked (GlcNAc...) asparagine glycosylation is found at Asn-106, Asn-163, Asn-236, Asn-255, and Asn-269. The segment at 305–328 (EDAAEDGRSSHHRHRRGQETVSSE) is disordered. Residue Asn-339 is glycosylated (N-linked (GlcNAc...) asparagine). Cystine bridges form between Cys-354/Cys-420, Cys-383/Cys-452, and Cys-387/Cys-454.

Belongs to the TGF-beta family. In terms of assembly, homodimer or heterodimer (Potential). But, in contrast to other members of this family, cannot be disulfide-linked. In terms of processing, phosphorylated; phosphorylation is critical for GDF9 function.

It is found in the secreted. Functionally, required for ovarian folliculogenesis. In Papio anubis (Olive baboon), this protein is Growth/differentiation factor 9 (GDF9).